The chain runs to 600 residues: Alpha pinene synthase, chloroplastic (600 aa).

Residues 1–26 (MSSISMHARPLNISAANNHHPSWDRR) form a disordered region. Residues 1-31 (MSSISMHARPLNISAANNHHPSWDRRVSKPR) constitute a chloroplast transit peptide. Mg(2+) contacts are provided by aspartate 354, aspartate 358, aspartate 498, and glutamate 506. The DDXXD motif signature appears at 354 to 358 (DDVYD).

It belongs to the terpene synthase family. Tpsa subfamily. It depends on Mg(2+) as a cofactor. Requires Mn(2+) as cofactor. In terms of tissue distribution, barely detectable in leaves.

It is found in the plastid. It localises to the chloroplast. It carries out the reaction (2E)-geranyl diphosphate = alpha-pinene + diphosphate. The protein operates within secondary metabolite biosynthesis; terpenoid biosynthesis. Monoterpene synthase involved in the biosynthesis of volatile compounds widely used in aromatherapy and folk medicine, and present in culinary herbs. Mediates the conversion of (2E)-geranyl diphosphate (GPP) into alpha-pinene and, as minor compounds, into alpha-phellandrene, limonene and alpha-terpinolene. The chain is Alpha pinene synthase, chloroplastic from Lavandula stoechas (Butterfly lavender).